The chain runs to 155 residues: Endoribonuclease YbeY (155 aa).

The Zn(2+) site is built by H114, H118, and H124.

The protein belongs to the endoribonuclease YbeY family. Requires Zn(2+) as cofactor.

Its subcellular location is the cytoplasm. Its function is as follows. Single strand-specific metallo-endoribonuclease involved in late-stage 70S ribosome quality control and in maturation of the 3' terminus of the 16S rRNA. The polypeptide is Endoribonuclease YbeY (Buchnera aphidicola subsp. Acyrthosiphon pisum (strain APS) (Acyrthosiphon pisum symbiotic bacterium)).